Here is a 449-residue protein sequence, read N- to C-terminus: tRNA-2-methylthio-N(6)-dimethylallyladenosine synthase (449 aa).

In terms of domain architecture, MTTase N-terminal spans 3–124; it reads KMLYIKTYGC…LPTMLEKLDS (122 aa). [4Fe-4S] cluster-binding residues include Cys-12, Cys-48, Cys-87, Cys-163, Cys-167, and Cys-170. The region spanning 149–380 is the Radical SAM core domain; sequence KSPTVSGLVS…QAQLMLQQLE (232 aa). Residues 383–447 form the TRAM domain; the sequence is QKLIGKVVPV…ASSLFGEVCP (65 aa).

Belongs to the methylthiotransferase family. MiaB subfamily. As to quaternary structure, monomer. The cofactor is [4Fe-4S] cluster.

It is found in the cytoplasm. It catalyses the reaction N(6)-dimethylallyladenosine(37) in tRNA + (sulfur carrier)-SH + AH2 + 2 S-adenosyl-L-methionine = 2-methylsulfanyl-N(6)-dimethylallyladenosine(37) in tRNA + (sulfur carrier)-H + 5'-deoxyadenosine + L-methionine + A + S-adenosyl-L-homocysteine + 2 H(+). In terms of biological role, catalyzes the methylthiolation of N6-(dimethylallyl)adenosine (i(6)A), leading to the formation of 2-methylthio-N6-(dimethylallyl)adenosine (ms(2)i(6)A) at position 37 in tRNAs that read codons beginning with uridine. This Orientia tsutsugamushi (strain Boryong) (Rickettsia tsutsugamushi) protein is tRNA-2-methylthio-N(6)-dimethylallyladenosine synthase.